The following is a 251-amino-acid chain: CDP-diacylglycerol pyrophosphatase (251 aa).

A helical membrane pass occupies residues 4-24 (AGLLFLVMIVIAVVAAGIGYW).

This sequence belongs to the Cdh family.

The protein resides in the cell inner membrane. The enzyme catalyses a CDP-1,2-diacyl-sn-glycerol + H2O = a 1,2-diacyl-sn-glycero-3-phosphate + CMP + 2 H(+). It functions in the pathway phospholipid metabolism; CDP-diacylglycerol degradation; phosphatidate from CDP-diacylglycerol: step 1/1. The polypeptide is CDP-diacylglycerol pyrophosphatase (Escherichia coli (strain SE11)).